A 315-amino-acid chain; its full sequence is MRVLLAPMEGVLDSLVRELLTEVNDYDLCITEFVRVVDQLLPVKVFHRICPELQNASRTPSGTLVRVQLLGQFPQWLAENAARAVELGSWGVDLNCGCPSKTVNGSGGGATLLKDPELIYQGAKAMREAVPAHLPVSVKVRLGWDSGEKKFEIADAVQQAGATELVVHGRTKEQGYRAEHIDWQAIGDIRQRLNIPVIANGEIWDWQSAQQCMAISGCDAVMIGRGALNIPNLSRVVKYNEPRMPWPEVVALLQKYTRLEKQGDTGLYHVARIKQWLSYLRKEYDEATELFQHVRVLNNSPDIARAIQAIDIEKL.

FMN-binding positions include 7–9 and Gln-68; that span reads PME. The active-site Proton donor is the Cys-98. FMN-binding positions include Lys-139, 200-202, and 224-225; these read NGE and GR.

This sequence belongs to the Dus family. DusC subfamily. Requires FMN as cofactor.

The enzyme catalyses 5,6-dihydrouridine(16) in tRNA + NADP(+) = uridine(16) in tRNA + NADPH + H(+). It carries out the reaction 5,6-dihydrouridine(16) in tRNA + NAD(+) = uridine(16) in tRNA + NADH + H(+). Functionally, catalyzes the synthesis of 5,6-dihydrouridine (D), a modified base found in the D-loop of most tRNAs, via the reduction of the C5-C6 double bond in target uridines. DusC specifically modifies U16 in tRNAs. This is tRNA-dihydrouridine(16) synthase from Escherichia coli (strain K12).